Consider the following 137-residue polypeptide: L-ectoine synthase (137 aa).

The disordered stretch occupies residues 118 to 137 (VHREDGSYAPADEADDQKPL).

The protein belongs to the ectoine synthase family.

It carries out the reaction (2S)-4-acetamido-2-aminobutanoate = L-ectoine + H2O. The protein operates within amine and polyamine biosynthesis; ectoine biosynthesis; L-ectoine from L-aspartate 4-semialdehyde: step 3/3. Its activity is regulated as follows. Seems to require potassium ions for its activity and stability. Slightly inhibited by N-ethylmaleimide. In terms of biological role, catalyzes the circularization of gamma-N-acetyl-alpha,gamma-diaminobutyric acid (ADABA) to ectoine (1,4,5,6-tetrahydro-2-methyl-4-pyrimidine carboxylic acid), which is an excellent osmoprotectant. Does not act on N-acetylated amino acids like N-alpha-acetyl-L-asparagine,N-alpha-acetyl-L-ornithine, N-alpha-acetyl-L-lysine and N-epsilon-acetyl-L-lysine. The sequence is that of L-ectoine synthase (ectC) from Halomonas elongata (strain ATCC 33173 / DSM 2581 / NBRC 15536 / NCIMB 2198 / 1H9).